Consider the following 452-residue polypeptide: Phosphoglucosamine mutase (452 aa).

S103 serves as the catalytic Phosphoserine intermediate. S103, D243, D245, and D247 together coordinate Mg(2+). S103 is modified (phosphoserine).

The protein belongs to the phosphohexose mutase family. Requires Mg(2+) as cofactor. Activated by phosphorylation.

The enzyme catalyses alpha-D-glucosamine 1-phosphate = D-glucosamine 6-phosphate. Its function is as follows. Catalyzes the conversion of glucosamine-6-phosphate to glucosamine-1-phosphate. This Limosilactobacillus fermentum (strain NBRC 3956 / LMG 18251) (Lactobacillus fermentum) protein is Phosphoglucosamine mutase.